The primary structure comprises 490 residues: Glutamyl-tRNA(Gln) amidotransferase subunit A (490 aa).

Active-site charge relay system residues include Lys78 and Ser158. A disordered region spans residues 131–159 (SNETSRFGPPINPWRRKGDNAGLTPGGSS). The active-site Acyl-ester intermediate is the Ser182.

The protein belongs to the amidase family. GatA subfamily. Heterotrimer of A, B and C subunits.

The enzyme catalyses L-glutamyl-tRNA(Gln) + L-glutamine + ATP + H2O = L-glutaminyl-tRNA(Gln) + L-glutamate + ADP + phosphate + H(+). Allows the formation of correctly charged Gln-tRNA(Gln) through the transamidation of misacylated Glu-tRNA(Gln) in organisms which lack glutaminyl-tRNA synthetase. The reaction takes place in the presence of glutamine and ATP through an activated gamma-phospho-Glu-tRNA(Gln). In Hyphomonas neptunium (strain ATCC 15444), this protein is Glutamyl-tRNA(Gln) amidotransferase subunit A.